Here is a 120-residue protein sequence, read N- to C-terminus: NAD(P)H-quinone oxidoreductase subunit 3, chloroplastic (120 aa).

The next 3 membrane-spanning stretches (helical) occupy residues 10–30 (FWLF…ISKI), 64–84 (MFAL…PWAM), and 89–109 (LGIS…IGLI).

The protein belongs to the complex I subunit 3 family. In terms of assembly, NDH is composed of at least 16 different subunits, 5 of which are encoded in the nucleus.

It is found in the plastid. The protein localises to the chloroplast thylakoid membrane. The catalysed reaction is a plastoquinone + NADH + (n+1) H(+)(in) = a plastoquinol + NAD(+) + n H(+)(out). It carries out the reaction a plastoquinone + NADPH + (n+1) H(+)(in) = a plastoquinol + NADP(+) + n H(+)(out). Functionally, NDH shuttles electrons from NAD(P)H:plastoquinone, via FMN and iron-sulfur (Fe-S) centers, to quinones in the photosynthetic chain and possibly in a chloroplast respiratory chain. The immediate electron acceptor for the enzyme in this species is believed to be plastoquinone. Couples the redox reaction to proton translocation, and thus conserves the redox energy in a proton gradient. This chain is NAD(P)H-quinone oxidoreductase subunit 3, chloroplastic, found in Angiopteris evecta (Mule's foot fern).